We begin with the raw amino-acid sequence, 642 residues long: A-kinase anchor protein 8-like (642 aa).

Residues 1–269 are sufficient for activation of CTE-mediated expression; sequence MSYTGFVQGS…MRRTWKTWTT (269 aa). Residue R209 is modified to Asymmetric dimethylarginine; alternate. Omega-N-methylarginine; alternate is present on R209. An omega-N-methylarginine mark is found at R218, R238, and R248. K258 bears the N6-acetyllysine mark. A disordered region spans residues 265 to 382; it reads KTWTTADFRT…QDKQKKRQRD (118 aa). A Phosphothreonine modification is found at T268. Residues 275–280 carry the Nuclear localization signal motif; the sequence is KKKKRK. Residues 281–297 carry the Nuclear export signal (NES) motif; sequence QGGSPDEPDSKATRTDC. Position 284 is a phosphoserine (S284). Residues 288–297 are compositionally biased toward basic and acidic residues; it reads PDSKATRTDC. The residue at position 293 (T293) is a Phosphothreonine. S298 is modified (phosphoserine). Acidic residues predominate over residues 299–315; the sequence is DNSDSDNDEGTEGEAAE. The segment covering 338 to 350 has biased composition (basic and acidic residues); it reads EDGREEGKEDPEK. A Nuclear localization signal motif is present at residues 363 to 365; it reads KRK. 2 C2H2 AKAP95-type zinc fingers span residues 392–414 and 485–508; these read CSLC…SKFH and CAAC…TMDH. The interval 546–642 is disordered; it reads GENPFTDNPE…EDDEEGGGGP (97 aa). Residues 553–564 are compositionally biased toward acidic residues; that stretch reads NPEEEKEQDEVE. Over residues 585–605 the composition is skewed to pro residues; that stretch reads AQPPVPLEPAPGTTTPPPPPP. The segment covering 631 to 642 has biased composition (acidic residues); that stretch reads DMEDDEEGGGGP.

This sequence belongs to the AKAP95 family. Interacts (via N-terminus) with DHX9 (via RGG region). Interacts with TMPO isoform Beta, PRPF40A, RNF43, lamin-B. Interacts with HDAC3; increased during mitosis. Post-translationally, phosphorylated on serine or threonine residues possibly by PKA.

Its subcellular location is the nucleus. It localises to the nucleus matrix. The protein resides in the nucleus speckle. The protein localises to the PML body. It is found in the cytoplasm. Could play a role in constitutive transport element (CTE)-mediated gene expression by association with DHX9. Increases CTE-dependent nuclear unspliced mRNA export. Proposed to target PRKACA to the nucleus but does not seem to be implicated in the binding of regulatory subunit II of PKA. May be involved in nuclear envelope breakdown and chromatin condensation. May be involved in anchoring nuclear membranes to chromatin in interphase and in releasing membranes from chromating at mitosis. May regulate the initiation phase of DNA replication when associated with TMPO isoform Beta. Required for cell cycle G2/M transition and histone deacetylation during mitosis. In mitotic cells recruits HDAC3 to the vicinity of chromatin leading to deacetylation and subsequent phosphorylation at 'Ser-10' of histone H3; in this function seems to act redundantly with AKAP8. May be involved in regulation of pre-mRNA splicing. This Mus musculus (Mouse) protein is A-kinase anchor protein 8-like (Akap8l).